The primary structure comprises 240 residues: Ribonuclease PH (240 aa).

Residues arginine 87 and 125–127 each bind phosphate; that span reads GTR.

Belongs to the RNase PH family. In terms of assembly, homohexameric ring arranged as a trimer of dimers.

The catalysed reaction is tRNA(n+1) + phosphate = tRNA(n) + a ribonucleoside 5'-diphosphate. In terms of biological role, phosphorolytic 3'-5' exoribonuclease that plays an important role in tRNA 3'-end maturation. Removes nucleotide residues following the 3'-CCA terminus of tRNAs; can also add nucleotides to the ends of RNA molecules by using nucleoside diphosphates as substrates, but this may not be physiologically important. Probably plays a role in initiation of 16S rRNA degradation (leading to ribosome degradation) during starvation. This chain is Ribonuclease PH, found in Pseudomonas fluorescens (strain Pf0-1).